The sequence spans 743 residues: Isocitrate dehydrogenase [NADP] 2 (743 aa).

Positions 87 and 89 each coordinate NADP(+). Residues Ser-134, Asn-137, Arg-141, Arg-147, and Lys-257 each contribute to the D-threo-isocitrate site. Asn-137 serves as a coordination point for NADP(+). Asp-352 lines the Mg(2+) pocket. 2 residues coordinate D-threo-isocitrate: Tyr-422 and Arg-549. The Mg(2+) site is built by Asp-550 and Asp-554. NADP(+) is bound by residues Ser-587, His-591, Arg-602, Asp-604, and Arg-651.

Belongs to the monomeric-type IDH family. As to quaternary structure, monomer. Mg(2+) is required as a cofactor. Requires Mn(2+) as cofactor.

The enzyme catalyses D-threo-isocitrate + NADP(+) = 2-oxoglutarate + CO2 + NADPH. In terms of biological role, catalyzes the oxidative decarboxylation of isocitrate to 2-oxoglutarate and carbon dioxide with the concomitant reduction of NADP(+). This Colwellia maris protein is Isocitrate dehydrogenase [NADP] 2 (icd2).